We begin with the raw amino-acid sequence, 280 residues long: F420-dependent methylenetetrahydromethanopterin dehydrogenase (280 aa).

It belongs to the MTD family.

The enzyme catalyses 5,10-methylenetetrahydromethanopterin + oxidized coenzyme F420-(gamma-L-Glu)(n) + 2 H(+) = 5,10-methenyl-5,6,7,8-tetrahydromethanopterin + reduced coenzyme F420-(gamma-L-Glu)(n). It participates in one-carbon metabolism; methanogenesis from CO(2); 5,10-methylene-5,6,7,8-tetrahydromethanopterin from 5,10-methenyl-5,6,7,8-tetrahydromethanopterin (coenzyme F420 route): step 1/1. In terms of biological role, catalyzes the reversible reduction of methenyl-H(4)MPT(+) to methylene-H(4)MPT. In Methanocorpusculum labreanum (strain ATCC 43576 / DSM 4855 / Z), this protein is F420-dependent methylenetetrahydromethanopterin dehydrogenase.